The primary structure comprises 370 residues: Natural killer cell receptor 2B4 (370 aa).

Positions 1–21 (MLGQVVTLILLLLLKVYQGKG) are cleaved as a signal peptide. 2 Ig-like domains span residues 22 to 127 (CQGS…FVFE) and 131 to 215 (PDKV…LNLT). Over 22–229 (CQGSADHVVS…NAHQEFRFWP (208 aa)) the chain is Extracellular. N-linked (GlcNAc...) asparagine glycans are attached at residues asparagine 71, asparagine 77, asparagine 89, asparagine 164, asparagine 181, asparagine 192, asparagine 200, and asparagine 213. Cysteine 157 and cysteine 199 are oxidised to a cystine. The helical transmembrane segment at 230–250 (FLVIIVILSALFLGTLACFCV) threads the bilayer. The Cytoplasmic segment spans residues 251 to 370 (WRRKRKEKQS…KELENFDVYS (120 aa)). 4 short sequence motifs (ITSM) span residues 269 to 274 (TIYEDV), 295 to 300 (TIYSMI), 315 to 320 (TLYSLI), and 340 to 345 (TIYEVI). At tyrosine 271 the chain carries Phosphotyrosine. Tyrosine 297 is modified (phosphotyrosine; by FYN). Phosphotyrosine is present on tyrosine 317. The disordered stretch occupies residues 324 to 370 (RKSGSRKRNHSPSFNSTIYEVIGKSQPKAQNPARLSRKELENFDVYS). Phosphotyrosine; by FYN is present on tyrosine 342.

Interacts with CD48. Interacts (via phosphorylated ITSM 1-4) with SH2D1A (via SH2 domain); SH2D1A probably mediates association with FYN. Interacts (via phosphorylated ITSM 3) with PTPN11/SHP-2, INPP5D/SHIP1, PTPN6/SHP-1 and CSK; binding of SH2D1A/SAP prevents association with PTPN11, PTPN6 and CSK; conflictingly a similar association has been described for phosphorylated ITSM 1 also including GRB2 and PLCG1. Interacts weakly (via phosphorylated ITSM 2) with PTPN11/SHP-2 and CSK. Interacts with SH2D1B. Interacts with PIK3R1; PI3K recruits SH2D1A. Interacts with MHC class I proteins; the interaction is proposed to prevent self-killing of NK cells. Post-translationally, N-linked glycosylation is essential for the binding to its ligand CD48. Also O-glycosylated, in contrast, O-linked sialylation has a negative impact on ligand binding. In terms of processing, phosphorylated by FYN and CSK on tyrosine residues following activation. Coligation with inhibitory receptors such as KIR2DL1 inhibits phosphorylation upon contact of NK cells with sensitive target cells. Expressed in spleen, PBL, followed by lung, liver, testis and small intestine. Expressed in all natural killer (NK) cells, monocytes and basophils, TCR-gamma/delta+ T-cells, monocytes, basophils, and on a subset of CD8(+) T-cells.

The protein localises to the membrane. Its subcellular location is the cell membrane. It is found in the membrane raft. Its function is as follows. Heterophilic receptor of the signaling lymphocytic activation molecule (SLAM) family; its ligand is CD48. SLAM receptors triggered by homo- or heterotypic cell-cell interactions are modulating the activation and differentiation of a wide variety of immune cells and thus are involved in the regulation and interconnection of both innate and adaptive immune response. Activities are controlled by presence or absence of small cytoplasmic adapter proteins, SH2D1A/SAP and/or SH2D1B/EAT-2. Acts as activating natural killer (NK) cell receptor. Activating function implicates association with SH2D1A and FYN. Downstreaming signaling involves predominantly VAV1, and, to a lesser degree, INPP5D/SHIP1 and CBL. Signal attenuation in the absence of SH2D1A is proposed to be dependent on INPP5D and to a lesser extent PTPN6/SHP-1 and PTPN11/SHP-2. Stimulates NK cell cytotoxicity, production of IFN-gamma and granule exocytosis. Optimal expansion and activation of NK cells seems to be dependent on the engagement of CD244 with CD48 expressed on neighboring NK cells. Acts as costimulator in NK activation by enhancing signals by other NK receptors such as NCR3 and NCR1. At early stages of NK cell differentiation may function as an inhibitory receptor possibly ensuring the self-tolerance of developing NK cells. Involved in the regulation of CD8(+) T-cell proliferation; expression on activated T-cells and binding to CD48 provides costimulatory-like function for neighboring T-cells. Inhibits inflammatory responses in dendritic cells (DCs). The chain is Natural killer cell receptor 2B4 (CD244) from Homo sapiens (Human).